The primary structure comprises 154 residues: 6,7-dimethyl-8-ribityllumazine synthase (154 aa).

Residues W22, 56-58 (AWE), and 80-82 (CVV) each bind 5-amino-6-(D-ribitylamino)uracil. 85 to 86 (DT) is a (2S)-2-hydroxy-3-oxobutyl phosphate binding site. Residue H88 is the Proton donor of the active site. N113 is a 5-amino-6-(D-ribitylamino)uracil binding site. Residue R127 participates in (2S)-2-hydroxy-3-oxobutyl phosphate binding.

This sequence belongs to the DMRL synthase family. In terms of assembly, forms an icosahedral capsid composed of 60 subunits, arranged as a dodecamer of pentamers.

It catalyses the reaction (2S)-2-hydroxy-3-oxobutyl phosphate + 5-amino-6-(D-ribitylamino)uracil = 6,7-dimethyl-8-(1-D-ribityl)lumazine + phosphate + 2 H2O + H(+). It functions in the pathway cofactor biosynthesis; riboflavin biosynthesis; riboflavin from 2-hydroxy-3-oxobutyl phosphate and 5-amino-6-(D-ribitylamino)uracil: step 1/2. Its function is as follows. Catalyzes the formation of 6,7-dimethyl-8-ribityllumazine by condensation of 5-amino-6-(D-ribitylamino)uracil with 3,4-dihydroxy-2-butanone 4-phosphate. This is the penultimate step in the biosynthesis of riboflavin. The chain is 6,7-dimethyl-8-ribityllumazine synthase from Xylella fastidiosa (strain 9a5c).